A 358-amino-acid chain; its full sequence is MVSTTLPTQLETIRPGIKAPVKETLLTPRFYTTDFDKVANLVLTLQDEEIEAALEELRADYNRYHFVRNDDFKRSFDHIDGATRLAFIDFLERSCTSEFSGFLLFKELSRRLKNRSPKLAEAFHLLARDEARHAGFINKAMADFGLSLDLRYLTQKRTYTFFPPEWVIYTVYLSEKIGYWRYILMFRHLEKNPDHNIYPLFNYFECWCQDENRHGDFFKALLRSQTALWKTWQSRLWSRFFLLTVFVTHTLTVFERTDFYQSVGLDAKQYNVDVVTNTNATAARAFPEVLDTDNPKFFPRLEACASANEKLTAIANSEAPKLAKFCQKAPWIAVIIWQMICIFLQKPVDAEARRGMVC.

Belongs to the AcsF family. The cofactor is Fe cation.

It catalyses the reaction Mg-protoporphyrin IX 13-monomethyl ester + 3 NADPH + 3 O2 + 2 H(+) = 3,8-divinyl protochlorophyllide a + 3 NADP(+) + 5 H2O. It participates in porphyrin-containing compound metabolism; chlorophyll biosynthesis (light-independent). Functionally, catalyzes the formation of the isocyclic ring in chlorophyll biosynthesis. Mediates the cyclase reaction, which results in the formation of divinylprotochlorophyllide (Pchlide) characteristic of all chlorophylls from magnesium-protoporphyrin IX 13-monomethyl ester (MgPMME). This Synechocystis sp. (strain ATCC 27184 / PCC 6803 / Kazusa) protein is Magnesium-protoporphyrin IX monomethyl ester [oxidative] cyclase 2.